The sequence spans 504 residues: Maturase K (504 aa).

This sequence belongs to the intron maturase 2 family. MatK subfamily.

The protein localises to the plastid. It is found in the chloroplast. Functionally, usually encoded in the trnK tRNA gene intron. Probably assists in splicing its own and other chloroplast group II introns. The chain is Maturase K from Quercus rubra (Northern red oak).